Reading from the N-terminus, the 497-residue chain is MLLDAGPQFPALGVGTFARHHHHHHHHHAAVAAAAAAAAEMQERELSLAQNSFVEPTHMGAFKMNPGGGSGGGSGGGGGAGPNGGAGASGPHDLSPPGQTSAFTSQAGYPASALAPHSAYTGAAAFNSPRDFLFRGRGFAEGSAAAGGGQHGLFGPPAGSLHHHPHHHHQLSHGEHPQGHLLFPGIHDQHAAASQNTLGGQMRLGLPGEVFGRTDQYRQVSSPRGDPYTAAQLHNQYSPMNMGMNMAAHHHHHHHHPGAFFRYMRQQCIKQELICKWIDPEQLNNPKKSCNKTFSTMHELVTHMSVEHVGGPEQSNHICFWEECAREGKPFKAKYKLVNHIRVHTGEKPFPCPFPGCGKVFARSENLKIHKRTHTGEKPFQCEFEGCDRRFANSSDRKKHMHVHTSDKPYLCKMCDKSYTHPSSLRKHMKVHESSPQGSESSPAASSGYESSTPPGLVSPNSETQNPNLSPAAVSAVHSVSSGASGTLASNFNEWYV.

Disordered regions lie at residues His-58–Ala-107 and Ser-143–His-180. Positions Pro-66–Ala-88 are enriched in gly residues. The segment covering Pro-97 to Ala-107 has biased composition (polar residues). A compositionally biased stretch (basic residues) spans Leu-161–Leu-171. Residues Leu-273–His-308 form a C2H2-type 1; atypical zinc finger. The C2H2-type 2; atypical zinc finger occupies His-317–His-344. C2H2-type zinc fingers lie at residues Phe-350–His-374, Phe-380–His-404, and Tyr-410–His-432. The tract at residues Ser-423–Ala-473 is disordered. Over residues Ser-434–Ser-452 the composition is skewed to low complexity. A compositionally biased stretch (polar residues) spans Ser-459 to Leu-469.

This sequence belongs to the GLI C2H2-type zinc-finger protein family.

It is found in the nucleus. The protein localises to the cytoplasm. Transcriptional repressor that inhibits neurogenesis and induces neural and neural crest differentiation. Regulates anteroposterior patterning in early development by inhibiting expression of the nodal genes through the inhibition of vegt. Required for gastrulation movements and for proper anterior neural and axial development. May also act as a transcriptional activator. May bind to the minimal GLI-consensus sequence 5'-TGGGTGGTC-3'. This is Zinc finger protein ZIC 2-B (zic2-b) from Xenopus laevis (African clawed frog).